Here is a 521-residue protein sequence, read N- to C-terminus: Glucose-1-phosphate adenylyltransferase small subunit, chloroplastic/amyloplastic (521 aa).

The tract at residues 1–32 (MAASIGALKSSPSSNNCINERRNDSTRAVSSR) is disordered. A chloroplast-targeting transit peptide spans 1-72 (MAASIGALKS…RSPMIVSPKA (72 aa)). A substrate-binding site is contributed by Lys268. Positions 444 to 454 (TDADRKLLAAK) are allosteric regulation.

The protein belongs to the bacterial/plant glucose-1-phosphate adenylyltransferase family. As to quaternary structure, heterotetramer. Leaves and tubers.

The protein resides in the plastid. It is found in the chloroplast. Its subcellular location is the amyloplast. The enzyme catalyses alpha-D-glucose 1-phosphate + ATP + H(+) = ADP-alpha-D-glucose + diphosphate. It participates in glycan biosynthesis; starch biosynthesis. Its activity is regulated as follows. Activated by 3'phosphoglycerate, inhibited by orthophosphate. Allosteric regulation. Its function is as follows. This protein plays a role in synthesis of starch. It catalyzes the synthesis of the activated glycosyl donor, ADP-glucose from Glc-1-P and ATP. This Solanum tuberosum (Potato) protein is Glucose-1-phosphate adenylyltransferase small subunit, chloroplastic/amyloplastic.